The following is a 460-amino-acid chain: V-type ATP synthase beta chain 2 (460 aa).

Belongs to the ATPase alpha/beta chains family.

Produces ATP from ADP in the presence of a proton gradient across the membrane. The V-type beta chain is a regulatory subunit. The polypeptide is V-type ATP synthase beta chain 2 (Clostridium tetani (strain Massachusetts / E88)).